We begin with the raw amino-acid sequence, 253 residues long: Isopentenyl-diphosphate delta-isomerase IDI1 (253 aa).

Position 61 (Lys61) interacts with substrate. 2 residues coordinate Mg(2+): His65 and His76. A Nudix hydrolase domain is found at 74–224 (LLHRAFSVFL…SLVFTPWFKL (151 aa)). Positions 94 and 99 each coordinate substrate. Cys111 is a catalytic residue. A substrate-binding site is contributed by Ser112. Residues 112 to 145 (SHPLHIPTETGSTLEDSIAGVKRAAQRKLEHELG) carry the Nudix box motif. Positions 174 and 176 each coordinate Mg(2+). Residue Glu176 is part of the active site.

Belongs to the IPP isomerase type 1 family. It depends on Mg(2+) as a cofactor.

It carries out the reaction isopentenyl diphosphate = dimethylallyl diphosphate. Its pathway is isoprenoid biosynthesis; dimethylallyl diphosphate biosynthesis; dimethylallyl diphosphate from isopentenyl diphosphate: step 1/1. In terms of biological role, isopentenyl-diphosphate delta-isomerase; part of the second module of ergosterol biosynthesis pathway that includes the middle steps of the pathway. IDI1 catalyzes the 1,3-allylic rearrangement of isopentenyl (IPP) to its highly electrophilic allylic isomer, dimethylallyl diphosphate (DMAPP). The second module is carried out in the vacuole and involves the formation of farnesyl diphosphate, which is also an important intermediate in the biosynthesis of ubiquinone, dolichol, heme and prenylated proteins. Activity by the mevalonate kinase ERG12 (FG05912) first converts mevalonate into 5-phosphomevalonate. 5-phosphomevalonate is then further converted to 5-diphosphomevalonate by the phosphomevalonate kinase ERG8 (FG09764). The diphosphomevalonate decarboxylase ERG19 (FG10424) then produces isopentenyl diphosphate. The isopentenyl-diphosphate delta-isomerase IDI1 (FG09722) then catalyzes the 1,3-allylic rearrangement of the homoallylic substrate isopentenyl (IPP) to its highly electrophilic allylic isomer, dimethylallyl diphosphate (DMAPP). Finally the farnesyl diphosphate synthase ERG20 (FG06784) catalyzes the sequential condensation of isopentenyl pyrophosphate with dimethylallyl pyrophosphate, and then with the resultant geranylpyrophosphate to the ultimate product farnesyl pyrophosphate. The chain is Isopentenyl-diphosphate delta-isomerase IDI1 from Gibberella zeae (strain ATCC MYA-4620 / CBS 123657 / FGSC 9075 / NRRL 31084 / PH-1) (Wheat head blight fungus).